Here is a 1074-residue protein sequence, read N- to C-terminus: Chitin synthase 2 (1074 aa).

3 disordered regions span residues Met-1 to Gly-32, Gln-56 to His-179, and Arg-209 to Asn-255. Over residues Asp-19–Ala-29 the composition is skewed to polar residues. Over residues Arg-68–Ser-80 the composition is skewed to low complexity. N-linked (GlcNAc...) asparagine glycans are attached at residues Asn-72 and Asn-97. Residues Ala-85–Ala-119 show a composition bias toward polar residues. Residues Ser-129–Pro-143 show a composition bias toward low complexity. Residue Asn-149 is glycosylated (N-linked (GlcNAc...) asparagine). An N-linked (GlcNAc...) asparagine glycan is attached at Asn-289. Transmembrane regions (helical) follow at residues Val-608–Leu-628, Leu-742–Leu-762, Gly-779–Val-799, Ile-817–Leu-837, Ile-867–Glu-887, Met-891–Met-911, Leu-1001–Trp-1021, and Ile-1048–Leu-1068.

Belongs to the chitin synthase family. Class II subfamily.

Its subcellular location is the cell membrane. The protein localises to the cytoplasmic vesicle membrane. The catalysed reaction is [(1-&gt;4)-N-acetyl-beta-D-glucosaminyl](n) + UDP-N-acetyl-alpha-D-glucosamine = [(1-&gt;4)-N-acetyl-beta-D-glucosaminyl](n+1) + UDP + H(+). In terms of biological role, polymerizes chitin, a structural polymer of the cell wall and septum, by transferring the sugar moiety of UDP-GlcNAc to the non-reducing end of the growing chitin polymer. This Mycosarcoma maydis (Corn smut fungus) protein is Chitin synthase 2 (CHS2).